A 362-amino-acid chain; its full sequence is MSRPIRAFINCAALRHNLAVVRRHVHQARIMAVVKADAYGHGLLRVARALDAVDGFAVLELEAAIQLREAGFSQLILLLEGFFSIEEIEAINHYRLSTVIHCHEQLSMLLAHKKTGKPDIFLKINTGMNRLGFRPEEGNSVLNRLRQWHTDISITLMTHFACADDLLEADHVDQQLGSFARLEEKREGCIPRTLANSAAILRYPGTHADWVRPGIILYGASPLPDKTGIELGLQPVMTLTSRIIAVQHLDFSDRLGYGGQFVADQPMRVGVVAAGYADGYPRHAPTGTPVLVNGRRTRLIGRVSMDMLTVDLSGINEAGAGSLVTLWGEGLPVEEVARSAQTISYELLAALSPRVQTVSSIP.

The active-site Proton acceptor; specific for D-alanine is the K35. Residue K35 is modified to N6-(pyridoxal phosphate)lysine. R130 is a binding site for substrate. Y257 acts as the Proton acceptor; specific for L-alanine in catalysis. M305 serves as a coordination point for substrate.

Belongs to the alanine racemase family. The cofactor is pyridoxal 5'-phosphate.

The catalysed reaction is L-alanine = D-alanine. The protein operates within amino-acid biosynthesis; D-alanine biosynthesis; D-alanine from L-alanine: step 1/1. Its function is as follows. Catalyzes the interconversion of L-alanine and D-alanine. May also act on other amino acids. This is Alanine racemase (alr) from Nitrosomonas europaea (strain ATCC 19718 / CIP 103999 / KCTC 2705 / NBRC 14298).